A 637-amino-acid polypeptide reads, in one-letter code: Nuclear receptor subfamily 2 group C member 1-A (637 aa).

Positions 149–224 (VELCVVCGDK…LGMKQDSVQC (76 aa)) form a DNA-binding region, nuclear receptor. 2 consecutive NR C4-type zinc fingers follow at residues 152-172 (CVVCGDKASGRHYGAVTCEGC) and 188-207 (CRGSKDCVINKHYRNRCQYC). The region spanning 383–624 (CLGSNANLLH…SIIPYILRME (242 aa)) is the NR LBD domain.

It belongs to the nuclear hormone receptor family. NR2 subfamily.

The protein localises to the nucleus. Orphan nuclear receptor. Binds the IR7 element in the promoter of its own gene in an autoregulatory negative feedback mechanism. Primarily repressor of a broad range of genes. Binds to hormone response elements (HREs) consisting of two 5'-AGGTCA-3' half site direct repeat consensus sequences. This Xenopus laevis (African clawed frog) protein is Nuclear receptor subfamily 2 group C member 1-A (nr2c1-a).